The following is a 124-amino-acid chain: Small ribosomal subunit protein uS12 (124 aa).

At Asp89 the chain carries 3-methylthioaspartic acid.

It belongs to the universal ribosomal protein uS12 family. Part of the 30S ribosomal subunit. Contacts proteins S8 and S17. May interact with IF1 in the 30S initiation complex.

Functionally, with S4 and S5 plays an important role in translational accuracy. Its function is as follows. Interacts with and stabilizes bases of the 16S rRNA that are involved in tRNA selection in the A site and with the mRNA backbone. Located at the interface of the 30S and 50S subunits, it traverses the body of the 30S subunit contacting proteins on the other side and probably holding the rRNA structure together. The combined cluster of proteins S8, S12 and S17 appears to hold together the shoulder and platform of the 30S subunit. This chain is Small ribosomal subunit protein uS12, found in Baumannia cicadellinicola subsp. Homalodisca coagulata.